The primary structure comprises 914 residues: Protein translocase subunit SecA (914 aa).

Residues Gln-86, Gly-104–Thr-108, and Asp-512 each bind ATP. 4 residues coordinate Zn(2+): Cys-898, Cys-900, Cys-909, and His-910.

Belongs to the SecA family. As to quaternary structure, monomer and homodimer. Part of the essential Sec protein translocation apparatus which comprises SecA, SecYEG and auxiliary proteins SecDF-YajC and YidC. Requires Zn(2+) as cofactor.

It localises to the cell inner membrane. It is found in the cytoplasm. The enzyme catalyses ATP + H2O + cellular proteinSide 1 = ADP + phosphate + cellular proteinSide 2.. In terms of biological role, part of the Sec protein translocase complex. Interacts with the SecYEG preprotein conducting channel. Has a central role in coupling the hydrolysis of ATP to the transfer of proteins into and across the cell membrane, serving both as a receptor for the preprotein-SecB complex and as an ATP-driven molecular motor driving the stepwise translocation of polypeptide chains across the membrane. This chain is Protein translocase subunit SecA, found in Bordetella petrii (strain ATCC BAA-461 / DSM 12804 / CCUG 43448).